The primary structure comprises 125 residues: MIEINFDKMGGLIPAVIQDYENGEVLMVAFMDKKTLDLTLRDGKTWFFSRTRNKYWMKGEESGNTQDVMEVLTDCDADTVVIKVRQNGPAACHTGNRSCFYVKWEDGQWVEHSNPLFNPEEVYKK.

Asp-74 lines the Mg(2+) pocket. Residue Cys-75 coordinates Zn(2+). Positions 76 and 78 each coordinate Mg(2+). Residues Cys-92 and Cys-99 each contribute to the Zn(2+) site.

This sequence belongs to the PRA-CH family. In terms of assembly, homodimer. Mg(2+) is required as a cofactor. Zn(2+) serves as cofactor.

The protein localises to the cytoplasm. It carries out the reaction 1-(5-phospho-beta-D-ribosyl)-5'-AMP + H2O = 1-(5-phospho-beta-D-ribosyl)-5-[(5-phospho-beta-D-ribosylamino)methylideneamino]imidazole-4-carboxamide. The protein operates within amino-acid biosynthesis; L-histidine biosynthesis; L-histidine from 5-phospho-alpha-D-ribose 1-diphosphate: step 3/9. In terms of biological role, catalyzes the hydrolysis of the adenine ring of phosphoribosyl-AMP. This is Phosphoribosyl-AMP cyclohydrolase from Trichlorobacter lovleyi (strain ATCC BAA-1151 / DSM 17278 / SZ) (Geobacter lovleyi).